Here is a 389-residue protein sequence, read N- to C-terminus: Probable protein phosphatase 2C 12 (389 aa).

One can recognise a PPM-type phosphatase domain in the interval 42 to 356 (VASLFSQRGK…DDCSAVCLFL (315 aa)). 2 residues coordinate Mn(2+): Asp77 and Gly78. Residues 119–145 (AFSDDAAASSSADSSGNSSPQPSASAS) form a disordered region. Residues 121–145 (SDDAAASSSADSSGNSSPQPSASAS) show a composition bias toward low complexity. Mn(2+) contacts are provided by Asp301 and Asp347.

It belongs to the PP2C family. The cofactor is Mg(2+). Requires Mn(2+) as cofactor.

The catalysed reaction is O-phospho-L-seryl-[protein] + H2O = L-seryl-[protein] + phosphate. The enzyme catalyses O-phospho-L-threonyl-[protein] + H2O = L-threonyl-[protein] + phosphate. The chain is Probable protein phosphatase 2C 12 from Oryza sativa subsp. japonica (Rice).